A 425-amino-acid chain; its full sequence is Elongation factor 1-alpha (425 aa).

The tr-type G domain occupies Lys-5–Thr-221. A G1 region spans residues Gly-14–Ser-21. Gly-14 to Ser-21 is a binding site for GTP. Residue Ser-21 coordinates Mg(2+). The segment at Gly-70 to Asp-74 is G2. The segment at Asp-91–Gly-94 is G3. Residues Asp-91–His-95 and Asn-146–Asp-149 contribute to the GTP site. A G4 region spans residues Asn-146 to Asp-149. The G5 stretch occupies residues Ser-185–Leu-187.

It belongs to the TRAFAC class translation factor GTPase superfamily. Classic translation factor GTPase family. EF-Tu/EF-1A subfamily.

The protein localises to the cytoplasm. The enzyme catalyses GTP + H2O = GDP + phosphate + H(+). In terms of biological role, GTP hydrolase that promotes the GTP-dependent binding of aminoacyl-tRNA to the A-site of ribosomes during protein biosynthesis. This is Elongation factor 1-alpha from Methanoregula boonei (strain DSM 21154 / JCM 14090 / 6A8).